Here is a 965-residue protein sequence, read N- to C-terminus: Phosphatidylethanolamine N-methyltransferase (965 aa).

Residues 1–82 (MDRGLSTGTN…SPSEPKNLSD (82 aa)) are Lumenal-facing. The segment at 34 to 54 (PTVTNASNGKDKAGKTFGRTP) is disordered. The chain crosses the membrane as a helical span at residues 83–103 (LVVLTILAGHIFLLWILPSGA). Over 104 to 106 (KIP) the chain is Cytoplasmic. Residues 107–127 (VFAVIYLFWRSCYNAGIGWLL) traverse the membrane as a helical segment. The Lumenal segment spans residues 128 to 192 (HNQSHHKTLV…EYNTWLVFRR (65 aa)). Residues 193 to 213 (LVDLILMCDFASYCLFAIACS) traverse the membrane as a helical segment. Residues 214–220 (RHPANES) lie on the Cytoplasmic side of the membrane. Residues 221-241 (VLMTVIRWTSGIALVLFNLWV) form a helical membrane-spanning segment. Over 242 to 274 (KLDAHRVVKDYAWYWGDFFYLIDQELTFDGVFE) the chain is Lumenal. Residues 275–295 (MAPHPMYSVGYAGYYGISLMA) traverse the membrane as a helical segment. Residues 296 to 297 (AS) are Cytoplasmic-facing. Residues 298-318 (YKVLFISIIAHAAQFAFLVLV) form a helical membrane-spanning segment. The Lumenal portion of the chain corresponds to 319–394 (ENPHIDKTYN…LDLHRITDTS (76 aa)). The tract at residues 326–368 (TYNPPPPRKRTITEHDAASQRSQSPDTPNAPSVSEENVPNATT) is disordered. Over residues 344 to 368 (SQRSQSPDTPNAPSVSEENVPNATT) the composition is skewed to polar residues. Residues 395 to 415 (SILVQFLMFSLTVLTPSTPWY) form a helical membrane-spanning segment. A topological domain (cytoplasmic) is located at residue Q416. Residues 417 to 437 (FLFVANAAIWRLWYSVGIGYL) traverse the membrane as a helical segment. Residues 438 to 470 (LNRQSNCKSWTRHFVKYGETPHEAWNQWKGTYH) are Lumenal-facing. Residues 471–491 (LSMVMCYASFISAVWKMYTLP) form a helical membrane-spanning segment. At 492 to 503 (SNWGYGLAILRH) the chain is on the cytoplasmic side. Residues 504–524 (VLGAGLISLQIWTSVSIYESL) form a helical membrane-spanning segment. Residues 525 to 559 (GEFGWFYGDFFFDESPKLTYNGIYRFLNNPERVLG) are Lumenal-facing. The chain crosses the membrane as a helical span at residues 560–580 (LAGVWGAVLITASGTVAFLAF). The Cytoplasmic portion of the chain corresponds to 581–965 (LSHILSLGFI…GATTPTESKE (385 aa)).

It belongs to the class VI-like SAM-binding methyltransferase superfamily. CHO2 family.

It is found in the endoplasmic reticulum membrane. The catalysed reaction is a 1,2-diacyl-sn-glycero-3-phosphoethanolamine + S-adenosyl-L-methionine = a 1,2-diacyl-sn-glycero-3-phospho-N-methylethanolamine + S-adenosyl-L-homocysteine + H(+). It functions in the pathway phospholipid metabolism; phosphatidylcholine biosynthesis. Functionally, catalyzes the first step of the methylation pathway of phosphatidylcholine biosynthesis, the SAM-dependent methylation of phosphatidylethanolamine (PE) to phosphatidylmonomethylethanolamine (PMME). In Emericella nidulans (strain FGSC A4 / ATCC 38163 / CBS 112.46 / NRRL 194 / M139) (Aspergillus nidulans), this protein is Phosphatidylethanolamine N-methyltransferase.